Reading from the N-terminus, the 901-residue chain is Aconitate hydratase A (901 aa).

[4Fe-4S] cluster-binding residues include cysteine 443, cysteine 509, and cysteine 512.

It belongs to the aconitase/IPM isomerase family. Monomer. [4Fe-4S] cluster is required as a cofactor.

The enzyme catalyses citrate = D-threo-isocitrate. It carries out the reaction (2S,3R)-3-hydroxybutane-1,2,3-tricarboxylate = 2-methyl-cis-aconitate + H2O. Its pathway is carbohydrate metabolism; tricarboxylic acid cycle; isocitrate from oxaloacetate: step 2/2. The protein operates within organic acid metabolism; propanoate degradation. In terms of biological role, involved in the catabolism of short chain fatty acids (SCFA) via the tricarboxylic acid (TCA)(acetyl degradation route) and probably the 2-methylcitrate cycle I (propionate degradation route). Catalyzes the reversible isomerization of citrate to isocitrate via cis-aconitate. Could catalyze the hydration of 2-methyl-cis-aconitate to yield (2R,3S)-2-methylisocitrate. The apo form of AcnA functions as a RNA-binding regulatory protein. The chain is Aconitate hydratase A (acnA) from Staphylococcus epidermidis (strain ATCC 12228 / FDA PCI 1200).